Reading from the N-terminus, the 848-residue chain is Adenylate cyclase (848 aa).

The catalytic stretch occupies residues 1-535; sequence MYLYIETLKQ…DISHHFPLRL (535 aa). The regulatory stretch occupies residues 541-848; sequence KALYSPCEIR…SQPAQQFQLH (308 aa).

It belongs to the adenylyl cyclase class-1 family.

It is found in the cytoplasm. The enzyme catalyses ATP = 3',5'-cyclic AMP + diphosphate. With respect to regulation, the regulatory domain is involved in the regulation of cyclase activity by the carbon source. This chain is Adenylate cyclase (cya), found in Yersinia intermedia.